A 463-amino-acid chain; its full sequence is Cytidylate cyclase (463 aa).

A Guanylate cyclase domain is found at 122–231; sequence VTMFMDIIGS…IGIRIGIDLG (110 aa). Phe-125 is an a ribonucleoside 5'-triphosphate binding site. The Mn(2+) site is built by Asp-127, Ile-128, and Asp-171. The AGS-C domain stretch occupies residues 334 to 454; that stretch reads KPSRIKVVIS…VISNDTVIER (121 aa).

The protein belongs to the adenylyl cyclase class-4/guanylyl cyclase family. Pyrimidine cyclase subfamily. As to quaternary structure, homodimer. The cofactor is Mn(2+).

The protein resides in the cytoplasm. It catalyses the reaction CTP = 3',5'-cyclic CMP + diphosphate. In terms of biological role, pycsar (pyrimidine cyclase system for antiphage resistance) provides immunity against bacteriophage. The pyrimidine cyclase (PycC) synthesizes cyclic nucleotides in response to infection; these serve as specific second messenger signals. The signal activates the adjacent effector, leading to bacterial cell death and abortive phage infection. A clade E Pycsar system. Functionally, the pyrimidine cyclase gene of a two-gene Pycsar system, generates cyclic CMP (cCMP) from CTP in response to bacteriophage infection. Has little to no activity on ATP, GTP or UTP. Expression of this and adjacent effector Ec303145PycTM (AC P0DV27) confers resistance to bacteriophage P1, T5, lambda-vir and phi27. This chain is Cytidylate cyclase, found in Escherichia coli.